The chain runs to 485 residues: Glutamyl-tRNA(Gln) amidotransferase subunit A (485 aa).

Catalysis depends on charge relay system residues K76 and S152. The Acyl-ester intermediate role is filled by S176.

Belongs to the amidase family. GatA subfamily. As to quaternary structure, heterotrimer of A, B and C subunits.

It catalyses the reaction L-glutamyl-tRNA(Gln) + L-glutamine + ATP + H2O = L-glutaminyl-tRNA(Gln) + L-glutamate + ADP + phosphate + H(+). Its function is as follows. Allows the formation of correctly charged Gln-tRNA(Gln) through the transamidation of misacylated Glu-tRNA(Gln) in organisms which lack glutaminyl-tRNA synthetase. The reaction takes place in the presence of glutamine and ATP through an activated gamma-phospho-Glu-tRNA(Gln). The protein is Glutamyl-tRNA(Gln) amidotransferase subunit A of Dechloromonas aromatica (strain RCB).